Consider the following 141-residue polypeptide: Large ribosomal subunit protein uL13 (141 aa).

This sequence belongs to the universal ribosomal protein uL13 family. As to quaternary structure, part of the 50S ribosomal subunit.

Its function is as follows. This protein is one of the early assembly proteins of the 50S ribosomal subunit, although it is not seen to bind rRNA by itself. It is important during the early stages of 50S assembly. The sequence is that of Large ribosomal subunit protein uL13 from Helicobacter pylori (strain G27).